Here is an 86-residue protein sequence, read N- to C-terminus: Weak neurotoxin WNTX34 (86 aa).

The N-terminal stretch at 1–21 (MKTLLLTLVVVTIVCLDLGYS) is a signal peptide. 5 disulfides stabilise this stretch: C24–C45, C27–C32, C38–C63, C67–C78, and C79–C84.

It belongs to the three-finger toxin family. Ancestral subfamily. Orphan group II sub-subfamily. As to expression, expressed by the venom gland.

It localises to the secreted. Binds with low affinity to muscular (alpha-1-beta-1-delta-epsilon/CHRNA1-CHRNB1-CHRND-CHRNE) and very low affinity to neuronal (alpha-7/CHRNA7) nicotinic acetylcholine receptor (nAChR). The chain is Weak neurotoxin WNTX34 from Ophiophagus hannah (King cobra).